We begin with the raw amino-acid sequence, 370 residues long: Dihydrolipoyllysine-residue acetyltransferase component of acetoin cleaving system (370 aa).

In terms of domain architecture, Lipoyl-binding spans 4–79 (IHTLTMPKWG…PVGALLAVVV (76 aa)). N6-lipoyllysine is present on lysine 45. The 221-residue stretch at 135–355 (PLVLVHGFGG…EAGHMVQMEA (221 aa)) folds into the AB hydrolase-1 domain.

Requires (R)-lipoate as cofactor.

It carries out the reaction N(6)-[(R)-dihydrolipoyl]-L-lysyl-[protein] + acetyl-CoA = N(6)-[(R)-S(8)-acetyldihydrolipoyl]-L-lysyl-[protein] + CoA. It functions in the pathway ketone degradation; acetoin degradation. This is Dihydrolipoyllysine-residue acetyltransferase component of acetoin cleaving system (acoC) from Pseudomonas putida (Arthrobacter siderocapsulatus).